The primary structure comprises 443 residues: ATP-dependent protease ATPase subunit HslU (443 aa).

ATP is bound by residues Ile-19, 61-66 (GVGKTE), Asp-256, Glu-321, and Arg-393.

It belongs to the ClpX chaperone family. HslU subfamily. As to quaternary structure, a double ring-shaped homohexamer of HslV is capped on each side by a ring-shaped HslU homohexamer. The assembly of the HslU/HslV complex is dependent on binding of ATP.

Its subcellular location is the cytoplasm. Its function is as follows. ATPase subunit of a proteasome-like degradation complex; this subunit has chaperone activity. The binding of ATP and its subsequent hydrolysis by HslU are essential for unfolding of protein substrates subsequently hydrolyzed by HslV. HslU recognizes the N-terminal part of its protein substrates and unfolds these before they are guided to HslV for hydrolysis. The polypeptide is ATP-dependent protease ATPase subunit HslU (Ralstonia nicotianae (strain ATCC BAA-1114 / GMI1000) (Ralstonia solanacearum)).